Reading from the N-terminus, the 790-residue chain is LPS-assembly protein LptD (790 aa).

A signal peptide spans 1–20; that stretch reads MRMLRWLILSAFSVAGAVQA.

This sequence belongs to the LptD family. In terms of assembly, component of the lipopolysaccharide transport and assembly complex. Interacts with LptE and LptA.

It is found in the cell outer membrane. Functionally, together with LptE, is involved in the assembly of lipopolysaccharide (LPS) at the surface of the outer membrane. The polypeptide is LPS-assembly protein LptD (Bordetella bronchiseptica (strain ATCC BAA-588 / NCTC 13252 / RB50) (Alcaligenes bronchisepticus)).